Here is a 341-residue protein sequence, read N- to C-terminus: Uroporphyrinogen decarboxylase (341 aa).

Substrate is bound by residues 23 to 27 (RQAGR), Asp73, Tyr148, Ser203, and His318.

The protein belongs to the uroporphyrinogen decarboxylase family. In terms of assembly, homodimer.

It is found in the cytoplasm. The catalysed reaction is uroporphyrinogen III + 4 H(+) = coproporphyrinogen III + 4 CO2. Its pathway is porphyrin-containing compound metabolism; protoporphyrin-IX biosynthesis; coproporphyrinogen-III from 5-aminolevulinate: step 4/4. Functionally, catalyzes the decarboxylation of four acetate groups of uroporphyrinogen-III to yield coproporphyrinogen-III. The sequence is that of Uroporphyrinogen decarboxylase from Brucella anthropi (strain ATCC 49188 / DSM 6882 / CCUG 24695 / JCM 21032 / LMG 3331 / NBRC 15819 / NCTC 12168 / Alc 37) (Ochrobactrum anthropi).